The sequence spans 130 residues: Ribosome-binding factor A (130 aa).

The protein belongs to the RbfA family. Monomer. Binds 30S ribosomal subunits, but not 50S ribosomal subunits or 70S ribosomes.

The protein localises to the cytoplasm. Its function is as follows. One of several proteins that assist in the late maturation steps of the functional core of the 30S ribosomal subunit. Associates with free 30S ribosomal subunits (but not with 30S subunits that are part of 70S ribosomes or polysomes). Required for efficient processing of 16S rRNA. May interact with the 5'-terminal helix region of 16S rRNA. The chain is Ribosome-binding factor A from Prochlorococcus marinus (strain MIT 9215).